We begin with the raw amino-acid sequence, 254 residues long: Phosphoribosylaminoimidazole-succinocarboxamide synthase 1 (254 aa).

Belongs to the SAICAR synthetase family.

The catalysed reaction is 5-amino-1-(5-phospho-D-ribosyl)imidazole-4-carboxylate + L-aspartate + ATP = (2S)-2-[5-amino-1-(5-phospho-beta-D-ribosyl)imidazole-4-carboxamido]succinate + ADP + phosphate + 2 H(+). Its pathway is purine metabolism; IMP biosynthesis via de novo pathway; 5-amino-1-(5-phospho-D-ribosyl)imidazole-4-carboxamide from 5-amino-1-(5-phospho-D-ribosyl)imidazole-4-carboxylate: step 1/2. In Agrobacterium fabrum (strain C58 / ATCC 33970) (Agrobacterium tumefaciens (strain C58)), this protein is Phosphoribosylaminoimidazole-succinocarboxamide synthase 1 (purC1).